We begin with the raw amino-acid sequence, 163 residues long: MALYETILIARQDITASQVEGLTETFTGILKENGGEVKKVEQWGLKTLTYRIKKNRKAHYVYIGHEAPAAAVAEMERNMSINEDVLRFMTVKVEKIEEGQTAMLTNKGERSERGPRGGFGDRGPRRDFGDRGPRRDFGDRGPRRDGDGPRAEGGRNEGEGDRA.

Positions 97–163 are disordered; sequence EEGQTAMLTN…GRNEGEGDRA (67 aa). Basic and acidic residues predominate over residues 122–163; the sequence is RGPRRDFGDRGPRRDFGDRGPRRDGDGPRAEGGRNEGEGDRA.

This sequence belongs to the bacterial ribosomal protein bS6 family.

Functionally, binds together with bS18 to 16S ribosomal RNA. This chain is Small ribosomal subunit protein bS6, found in Rhodospirillum centenum (strain ATCC 51521 / SW).